Reading from the N-terminus, the 102-residue chain is Small ribosomal subunit protein uS10 (102 aa).

The protein belongs to the universal ribosomal protein uS10 family. In terms of assembly, part of the 30S ribosomal subunit.

Functionally, involved in the binding of tRNA to the ribosomes. This is Small ribosomal subunit protein uS10 from Staphylococcus saprophyticus subsp. saprophyticus (strain ATCC 15305 / DSM 20229 / NCIMB 8711 / NCTC 7292 / S-41).